Consider the following 206-residue polypeptide: Superoxide dismutase [Mn] (206 aa).

Residues His27, His82, Asp168, and His172 each contribute to the Mn(2+) site.

Belongs to the iron/manganese superoxide dismutase family. As to quaternary structure, homodimer. Mn(2+) serves as cofactor.

The enzyme catalyses 2 superoxide + 2 H(+) = H2O2 + O2. Functionally, destroys superoxide anion radicals which are normally produced within the cells and which are toxic to biological systems. This is Superoxide dismutase [Mn] (sodA) from Salmonella typhimurium (strain LT2 / SGSC1412 / ATCC 700720).